Reading from the N-terminus, the 274-residue chain is Large ribosomal subunit protein uL2 (274 aa).

The segment at 197–274 (NSDHALEKSG…SKYIIERRKK (78 aa)) is disordered. Basic residues-rich tracts occupy residues 207-220 (KAGR…RPHN) and 244-274 (PRSR…RRKK).

The protein belongs to the universal ribosomal protein uL2 family. In terms of assembly, part of the 50S ribosomal subunit. Forms a bridge to the 30S subunit in the 70S ribosome.

Its function is as follows. One of the primary rRNA binding proteins. Required for association of the 30S and 50S subunits to form the 70S ribosome, for tRNA binding and peptide bond formation. It has been suggested to have peptidyltransferase activity; this is somewhat controversial. Makes several contacts with the 16S rRNA in the 70S ribosome. This is Large ribosomal subunit protein uL2 from Porphyromonas gingivalis (strain ATCC BAA-308 / W83).